The chain runs to 640 residues: Threonine--tRNA ligase (640 aa).

In terms of domain architecture, TGS spans 1–61 (MLVVTLPDGS…DKDSQLAIIT (61 aa)). The interval 242–533 (DHRRLGKQLD…LIENHTGNMP (292 aa)) is catalytic. Residues C333, H384, and H510 each coordinate Zn(2+).

The protein belongs to the class-II aminoacyl-tRNA synthetase family. As to quaternary structure, homodimer. Zn(2+) serves as cofactor.

The protein resides in the cytoplasm. It catalyses the reaction tRNA(Thr) + L-threonine + ATP = L-threonyl-tRNA(Thr) + AMP + diphosphate + H(+). Its function is as follows. Catalyzes the attachment of threonine to tRNA(Thr) in a two-step reaction: L-threonine is first activated by ATP to form Thr-AMP and then transferred to the acceptor end of tRNA(Thr). Also edits incorrectly charged L-seryl-tRNA(Thr). This Polynucleobacter necessarius subsp. necessarius (strain STIR1) protein is Threonine--tRNA ligase.